We begin with the raw amino-acid sequence, 576 residues long: Peptidoglycan D,D-transpeptidase FtsI (576 aa).

A helical membrane pass occupies residues 22–42 (ITILLSLIIITIILVLSRITF). Catalysis depends on Ser308, which acts as the Acyl-ester intermediate.

Belongs to the transpeptidase family. FtsI subfamily.

The protein localises to the cell inner membrane. It carries out the reaction Preferential cleavage: (Ac)2-L-Lys-D-Ala-|-D-Ala. Also transpeptidation of peptidyl-alanyl moieties that are N-acyl substituents of D-alanine.. It participates in cell wall biogenesis; peptidoglycan biosynthesis. In terms of biological role, catalyzes cross-linking of the peptidoglycan cell wall at the division septum. In Buchnera aphidicola subsp. Baizongia pistaciae (strain Bp), this protein is Peptidoglycan D,D-transpeptidase FtsI.